A 1072-amino-acid polypeptide reads, in one-letter code: DNA-directed RNA polymerase subunit beta (1072 aa).

Belongs to the RNA polymerase beta chain family. In terms of assembly, in plastids the minimal PEP RNA polymerase catalytic core is composed of four subunits: alpha, beta, beta', and beta''. When a (nuclear-encoded) sigma factor is associated with the core the holoenzyme is formed, which can initiate transcription.

It localises to the plastid. Its subcellular location is the chloroplast. It carries out the reaction RNA(n) + a ribonucleoside 5'-triphosphate = RNA(n+1) + diphosphate. DNA-dependent RNA polymerase catalyzes the transcription of DNA into RNA using the four ribonucleoside triphosphates as substrates. The chain is DNA-directed RNA polymerase subunit beta from Arabidopsis thaliana (Mouse-ear cress).